The primary structure comprises 397 residues: MSMNWWRDGAAKKRMDESSAVKLQQQQCVALIVGVTGLVGNSLAEMLPLSDTPGGPWKVYGVARRPRPSWNEDHPINYISCDVSNTAEVEAKLPPLSDVTHIFYATWTSRSSEEENCEANGKMLKNVLDTMIPNCPNLKHICLQTGRFHYVASVVDWKINGSHDTPLTEDLPRLNTNNFYYTQEDILLEEVKRKEGLTWSVHRPGTIFGFSPYSMMNLVGTLCVYAAICKQEGAVLRFPGCKGAWDGYSDCADADLIAEHYIWAALDPHAKNQSFNVSNGDVFKWKHLWKVLAEQFGVECGGYEYEEGQQVRLQDVMKDKGPVWDKIVRENGLSNTKLEDVGKWWFSDTILWNECRLDSMNKSKEHGFLGFRNSKNCFLYWIHKLKAYKIVPSSTIS.

Residues 36-38 (TGL), 64-65 (RR), 82-83 (DV), 106-107 (TW), Q144, Y180, I207, and 214-216 (SMM) each bind NADP(+). Y180 is a catalytic residue.

Belongs to the short-chain dehydrogenases/reductases (SDR) family.

The catalysed reaction is (S)-8-oxocitronellyl enol + NADP(+) = (6E)-8-oxogeranial + NADPH + H(+). It carries out the reaction (S)-8-oxocitronellyl enol + NAD(+) = (6E)-8-oxogeranial + NADH + H(+). Functionally, iridoid synthase that catalyzes the first step in generation of the iridoid ring scaffold using the linear monoterpene (6E)-8-oxogeranial as substrate. Iridoids comprise a large family of distinctive bicyclic monoterpenes that possess a wide range of pharmacological activities, including anticancer, anti-inflammatory, antifungal and antibacterial activities. Catalyzes the conversion of the linear monoterpene (6E)-8-oxogeranial to (S)-8-oxocitronellyl enol, a precursor of nepetalactones, which are metabolites that are both insect-repellent and have euphoric effect in cats. This is (S)-8-oxocitronellyl enol synthase ISY2 from Nepeta cataria (Catnip).